The chain runs to 303 residues: MSFEVTGPPLVSPWMMLSMSEARNDIDETKIVIPGHSVCDAPQQFMRGHGTYVRDGEIVSSLSGVVQQLNRLLMVKTIKQRYAGEVGDVVVARVVEVQAKRWKCDVASRLHANLPLGSVLLPGGDFRRKDVEDEEKMSEFLKNGELICAEVQQVQHDGTLMLHTRNNKYGKLQQGILIKVPPHLIKKSKKHFHTLPYGMAVIIGCNGSVWVTPSLPETTLEEDGSHVHEFQIVPPDVRVTMVRIAACVRLLRDYSISIYLNSLTTCYEMSQPYEIKELAEQDTSSRLAYLIAARLLQELQQQK.

The KH domain occupies 175–213; it reads GILIKVPPHLIKKSKKHFHTLPYGMAVIIGCNGSVWVTP.

Belongs to the RRP4 family. Component of the RNA exosome complex. As to expression, ubiquitously expressed.

It is found in the nucleus. Its subcellular location is the nucleolus. The protein resides in the nucleoplasm. Functionally, non-catalytic component of the RNA exosome complex which has 3'-&gt;5' exoribonuclease activity and participates in a multitude of cellular RNA processing and degradation events. Involved in regulation of antisense ribosomal siRNA production. Involved in response to cold-warm shock. In Caenorhabditis elegans, this protein is Exosome complex component RRP4 homolog.